Consider the following 251-residue polypeptide: Protein phosphatase 1 regulatory subunit 35 (251 aa).

Disordered stretches follow at residues 58–99 (LITV…QQTH) and 180–235 (PALA…VPRP). Basic and acidic residues predominate over residues 76–99 (PNKDEHGVETDREQSRECDGQQTH).

It belongs to the PPP1R35 family.

The protein localises to the cytoplasm. The protein resides in the cytoskeleton. It localises to the microtubule organizing center. It is found in the centrosome. Its subcellular location is the centriole. Its function is as follows. During centriole duplication, may play a role in the centriole elongation by promoting the recruitment of the microtubule-binding elongation machinery, leading to the centriole to centrosome conversion. In addition may play a role in the primary cilia assembly. The polypeptide is Protein phosphatase 1 regulatory subunit 35 (Danio rerio (Zebrafish)).